Reading from the N-terminus, the 471-residue chain is Argininosuccinate lyase (471 aa).

It belongs to the lyase 1 family. Argininosuccinate lyase subfamily.

The protein localises to the cytoplasm. The enzyme catalyses 2-(N(omega)-L-arginino)succinate = fumarate + L-arginine. Its pathway is amino-acid biosynthesis; L-arginine biosynthesis; L-arginine from L-ornithine and carbamoyl phosphate: step 3/3. This is Argininosuccinate lyase from Ehrlichia canis (strain Jake).